Here is a 364-residue protein sequence, read N- to C-terminus: Autophagy-related protein 14 (364 aa).

Residues 5–20 (CPICETQSHVFYCAHC) form a cysteine repeats region. Residues 38–114 (LGKINNALRN…QDRRIKEKSR (77 aa)) adopt a coiled-coil conformation.

This sequence belongs to the ATG14 family. As to quaternary structure, component of the autophagy-specific VPS34 PI3-kinase complex I composed of VPS15, VPS30, VPS34, ATG14 and ATG38. Interacts directly with ATG38.

It localises to the preautophagosomal structure membrane. The protein localises to the vacuole membrane. Required for cytoplasm to vacuole transport (Cvt) and autophagy as a part of the autophagy-specific VPS34 PI3-kinase complex I. This complex is essential to recruit the ATG8-phosphatidylinositol conjugate and the ATG12-ATG5 conjugate to the pre-autophagosomal structure. ATG14 mediates the specific binding of the VPS34 PI3-kinase complex I to the preautophagosomal structure (PAS). Required for survival and/or proliferation in kidneys and in brain. This chain is Autophagy-related protein 14, found in Candida glabrata (strain ATCC 2001 / BCRC 20586 / JCM 3761 / NBRC 0622 / NRRL Y-65 / CBS 138) (Yeast).